The following is a 169-amino-acid chain: Photosystem I assembly protein Ycf3 (169 aa).

3 TPR repeats span residues 35-68 (AFTY…ETDP), 72-105 (SYIL…NPSL), and 120-153 (GEQA…APGN).

Belongs to the Ycf3 family.

The protein localises to the plastid. It is found in the chloroplast thylakoid membrane. Essential for the assembly of the photosystem I (PSI) complex. May act as a chaperone-like factor to guide the assembly of the PSI subunits. The sequence is that of Photosystem I assembly protein Ycf3 from Pinus koraiensis (Korean pine).